A 390-amino-acid chain; its full sequence is Glutamyl-tRNA reductase (390 aa).

Substrate contacts are provided by residues 46–49 (TCNR), Ser96, 101–103 (EAQ), and Gln107. Cys47 functions as the Nucleophile in the catalytic mechanism. An NADP(+)-binding site is contributed by 176–181 (GAGEMA).

The protein belongs to the glutamyl-tRNA reductase family. As to quaternary structure, homodimer.

It carries out the reaction (S)-4-amino-5-oxopentanoate + tRNA(Glu) + NADP(+) = L-glutamyl-tRNA(Glu) + NADPH + H(+). The protein operates within porphyrin-containing compound metabolism; protoporphyrin-IX biosynthesis; 5-aminolevulinate from L-glutamyl-tRNA(Glu): step 1/2. Catalyzes the NADPH-dependent reduction of glutamyl-tRNA(Glu) to glutamate 1-semialdehyde (GSA). The chain is Glutamyl-tRNA reductase from Thermus thermophilus (strain ATCC BAA-163 / DSM 7039 / HB27).